The primary structure comprises 376 residues: tRNA-specific 2-thiouridylase MnmA (376 aa).

ATP contacts are provided by residues Gly-14–Ser-21 and Met-40. Residues Asn-100 to Asp-102 form an interaction with target base in tRNA region. Cys-105 functions as the Nucleophile in the catalytic mechanism. Cys-105 and Cys-202 are oxidised to a cystine. Gly-129 is a binding site for ATP. An interaction with tRNA region spans residues Lys-152–Gln-154. Cys-202 functions as the Cysteine persulfide intermediate in the catalytic mechanism. The tract at residues Arg-315–Tyr-316 is interaction with tRNA.

Belongs to the MnmA/TRMU family.

It is found in the cytoplasm. The enzyme catalyses S-sulfanyl-L-cysteinyl-[protein] + uridine(34) in tRNA + AH2 + ATP = 2-thiouridine(34) in tRNA + L-cysteinyl-[protein] + A + AMP + diphosphate + H(+). Catalyzes the 2-thiolation of uridine at the wobble position (U34) of tRNA, leading to the formation of s(2)U34. This chain is tRNA-specific 2-thiouridylase MnmA, found in Lactococcus lactis subsp. lactis (strain IL1403) (Streptococcus lactis).